A 216-amino-acid polypeptide reads, in one-letter code: 3-isopropylmalate dehydratase small subunit (216 aa).

The protein belongs to the LeuD family. LeuD type 1 subfamily. Heterodimer of LeuC and LeuD.

The catalysed reaction is (2R,3S)-3-isopropylmalate = (2S)-2-isopropylmalate. It functions in the pathway amino-acid biosynthesis; L-leucine biosynthesis; L-leucine from 3-methyl-2-oxobutanoate: step 2/4. Catalyzes the isomerization between 2-isopropylmalate and 3-isopropylmalate, via the formation of 2-isopropylmaleate. The polypeptide is 3-isopropylmalate dehydratase small subunit (Ralstonia nicotianae (strain ATCC BAA-1114 / GMI1000) (Ralstonia solanacearum)).